Here is a 343-residue protein sequence, read N- to C-terminus: Ribosome production factor 1 (343 aa).

Composition is skewed to basic and acidic residues over residues 1–10 (MAEKKGPEAK) and 82–91 (EREALGDKAP). 2 disordered regions span residues 1–51 (MAEK…LSEI) and 77–97 (KKRKKEREALGDKAPPKPVPK). A Brix domain is found at 136-319 (PKILITTSDR…LRSLQKGTFD (184 aa)). Positions 297-314 (VGIQELGPRFTLKLRSLQ) are RNA-binding.

It localises to the nucleus. The protein localises to the nucleolus. May be required for ribosome biogenesis. The sequence is that of Ribosome production factor 1 (rpf1) from Xenopus laevis (African clawed frog).